Here is a 181-residue protein sequence, read N- to C-terminus: Isopentenyl-diphosphate Delta-isomerase (181 aa).

The Mn(2+) site is built by H25 and H32. The 135-residue stretch at 30–164 (PLHLAFSCWL…PWAFSPWMVM (135 aa)) folds into the Nudix hydrolase domain. The active site involves C67. H69 contacts Mn(2+). Residue E87 participates in Mg(2+) binding. Mn(2+) is bound by residues E114 and E116. E116 is an active-site residue.

Belongs to the IPP isomerase type 1 family. In terms of assembly, homodimer. Requires Mg(2+) as cofactor. Mn(2+) serves as cofactor.

Its subcellular location is the cytoplasm. The enzyme catalyses isopentenyl diphosphate = dimethylallyl diphosphate. It functions in the pathway isoprenoid biosynthesis; dimethylallyl diphosphate biosynthesis; dimethylallyl diphosphate from isopentenyl diphosphate: step 1/1. Its function is as follows. Catalyzes the 1,3-allylic rearrangement of the homoallylic substrate isopentenyl (IPP) to its highly electrophilic allylic isomer, dimethylallyl diphosphate (DMAPP). This is Isopentenyl-diphosphate Delta-isomerase from Salmonella agona (strain SL483).